The chain runs to 197 residues: Peptide deformylase (197 aa).

2 residues coordinate Fe cation: Cys106 and His148. Glu149 is an active-site residue. Residue His152 participates in Fe cation binding.

This sequence belongs to the polypeptide deformylase family. Fe(2+) is required as a cofactor.

It catalyses the reaction N-terminal N-formyl-L-methionyl-[peptide] + H2O = N-terminal L-methionyl-[peptide] + formate. Its function is as follows. Removes the formyl group from the N-terminal Met of newly synthesized proteins. Requires at least a dipeptide for an efficient rate of reaction. N-terminal L-methionine is a prerequisite for activity but the enzyme has broad specificity at other positions. This chain is Peptide deformylase, found in Mycobacterium ulcerans (strain Agy99).